A 316-amino-acid polypeptide reads, in one-letter code: UDP-N-acetylenolpyruvoylglucosamine reductase (316 aa).

An FAD-binding PCMH-type domain is found at 30–194; the sequence is VGGEADYLVF…LSVKFALAPG (165 aa). Arg-173 is an active-site residue. Residue Ser-223 is the Proton donor of the active site. Glu-293 is a catalytic residue.

This sequence belongs to the MurB family. FAD serves as cofactor.

The protein localises to the cytoplasm. It carries out the reaction UDP-N-acetyl-alpha-D-muramate + NADP(+) = UDP-N-acetyl-3-O-(1-carboxyvinyl)-alpha-D-glucosamine + NADPH + H(+). It functions in the pathway cell wall biogenesis; peptidoglycan biosynthesis. Its function is as follows. Cell wall formation. In Streptococcus pneumoniae serotype 19F (strain G54), this protein is UDP-N-acetylenolpyruvoylglucosamine reductase.